The sequence spans 169 residues: Type II secretion system protein H (169 aa).

Positions 1 to 29 (MRVARLPLLHPHRAAPVVRRQLRGSSLLE) are cleaved as a propeptide — leader sequence. Met30 is subject to N-methylmethionine. Residues 32-52 (LVIALIALAGVLAAAALTGGI) traverse the membrane as a helical segment.

This sequence belongs to the GSP H family. Type II secretion is composed of four main components: the outer membrane complex, the inner membrane complex, the cytoplasmic secretion ATPase and the periplasm-spanning pseudopilus. Interacts with core component XpsG. Interacts with minor pseudopilins XpsI and XpsJ. Cleaved by prepilin peptidase. In terms of processing, methylated by prepilin peptidase at the amino group of the N-terminal phenylalanine once the leader sequence is cleaved by prepilin peptidase.

The protein localises to the cell inner membrane. Component of the type II secretion system required for the energy-dependent secretion of extracellular factors such as proteases and toxins from the periplasm. Part of the pseudopilus tip complex that is critical for the recognition and binding of secretion substrates. The polypeptide is Type II secretion system protein H (xpsH) (Xanthomonas campestris pv. campestris (strain ATCC 33913 / DSM 3586 / NCPPB 528 / LMG 568 / P 25)).